The sequence spans 314 residues: tRNA pseudouridine synthase B (314 aa).

H43 lines the substrate pocket. Catalysis depends on D48, which acts as the Nucleophile. 3 residues coordinate substrate: Y76, Y179, and L200.

This sequence belongs to the pseudouridine synthase TruB family. Type 1 subfamily.

It catalyses the reaction uridine(55) in tRNA = pseudouridine(55) in tRNA. Functionally, responsible for synthesis of pseudouridine from uracil-55 in the psi GC loop of transfer RNAs. The chain is tRNA pseudouridine synthase B from Salmonella choleraesuis (strain SC-B67).